Consider the following 1039-residue polypeptide: MDKGRAAKVCHHADCQQLHHRGPLNLCEICDSKFHNTTHYDGHVRFDLPPQGSVLARNVSTRSCPPRTSPAGDLEEEDEGYTNGKGDRKSAGLKISKKKARRRHTDDPSKECFTLKFDLNVDIETEIVPAMKKKSLGEVLLPVFERKGIALGKVDIYLDQSNTPLSLTFEAYRFGGHYLRVKAKPGDEGKVEQGVKDSKSLSLPALRPSGAGTPVLERVDPQSRRESSLDILAPGRRRKNMSEFLGDTSIPGQESPAPSSCSLPVGSSVGSSGSSESWKNRAASRFSGFFSSSPSTGAFGREVDKMEQLESKLHAYSLFGLPRMPRRLRFDHDSWEEEEDDEEEEDNSGLRLEDSWRELIDGHEKLTRRQCHQQEAVWELLHTEVSYIRKLRVITNLFLCCLLNLQESGLLCEVEAERLFSNIPELARLHRGLWSSVMVPVLEKARRTRALLQPSDFLKGFKMFGSLFKPYIRYCMEEEGCMEYMRSLLRDNDLFRAYVTWAEKHQQCQRLKLSDMLAKPHQRLTKYPLLLKSVLRKTDEPRAKEAIITMISSVERFIHHVNTCMRQRQERQRLAGVVSRIDAYEVVEGSNDEVDKFLKEFLHLDLTAPMPGTSPEETRQLLLEGSLRMKEGKDSKMDVYCFLFTDLLLVTKAVKKAERTKVIRPPLLVDKIVCRELRDPGSFLLIHLNEFHSAVGAYTFQASSQALCRSWVDTLYNAQNQLQQLRAQLLCAQEHPGTQHLQSLEEEEDEQEEEGEESGTSAASSPTILRKSSNSLDSEHCASDGSTETLAMVVVEPGETLSSPEFDRGPFSSQSDEASLSNTTSSITPTSELLPLGPVDGRSCSMDSAYGTLSPTSLQDFAAPHPVVEPVPVPQTLSPQPSPRLRRRTPVQLLPRLPHLLKSKSEASLLQLLSGTTTSVSPPAPSRSLSELCLITMAPGVRTQSSLQEGGPGWNCPGACGPCQGPPLSESENRPSHKAGGPADSARRKCREMPCGTVPRVQPEPSPGISAQHRKLTLAQLYRIRTTLLLNSTLTASEV.

Disordered regions lie at residues Asn-58–Thr-105 and Pro-185–Ser-277. Basic and acidic residues-rich tracts occupy residues Pro-185–Lys-199 and Glu-217–Ser-228. Residues Ser-259 to Ser-277 are compositionally biased toward low complexity. A DH domain is found at His-372–Cys-564. Residues Gln-620–Asn-720 form the PH domain. 2 disordered regions span residues Gln-739–Gly-785 and Thr-800–Leu-836. Acidic residues predominate over residues Leu-744–Glu-757. Polar residues-rich tracts occupy residues Ser-758–Leu-776 and Phe-811–Ser-831. Position 760 is a phosphothreonine (Thr-760). Ser-765 is modified (phosphoserine). The residue at position 876 (Thr-876) is a Phosphothreonine. A phosphoserine mark is found at Ser-878, Ser-903, and Ser-908. The tract at residues Pro-967 to Lys-989 is disordered.

As to quaternary structure, interacts with GIPC1/synectin and RHOA. As to expression, selectively expressed in cortical and hippocampal neurons with prominent expression in the cell bodies and dendrites. Weakly expressed in rat fad pad ECs (RFPECs).

It localises to the cytoplasm. It is found in the perinuclear region. The protein resides in the cell membrane. Its subcellular location is the cell junction. The protein localises to the cell projection. It localises to the lamellipodium. In terms of biological role, functions as a guanine exchange factor (GEF) for RAB26 and thus regulates autophagy of synaptic vesicles in axon terminal of motoneurons. Involved in the control of neuronal cell differentiation. Plays a role in angiogenesis through regulation of endothelial cells chemotaxis. Also affects the migration, adhesion, and matrix/bone degradation in macrophages and osteoclasts. The sequence is that of Pleckstrin homology domain-containing family G member 5 (Plekhg5) from Rattus norvegicus (Rat).